The chain runs to 193 residues: MKRSCENDVSVLRYGHRPGRDDRMTTHVGLTARALGADQVIFPDNATQSAETVSDIVSRFGGPFDVERTDGLNATIREWSGTVIHLTMYGERVQDVTEVIRETCLHHQPLLIIIGGEKVPSDVYEWADWNIAVTNQPHSEVAGLAVFLDRLFMGQELEQEWAGAEHVVVPQACGKRVVDAELTTEADEMNAEK.

S-adenosyl-L-methionine is bound by residues Leu86 and 115–119; that span reads GGEKV.

This sequence belongs to the aTrm56 family. In terms of assembly, homodimer.

The protein localises to the cytoplasm. It carries out the reaction cytidine(56) in tRNA + S-adenosyl-L-methionine = 2'-O-methylcytidine(56) in tRNA + S-adenosyl-L-homocysteine + H(+). Functionally, specifically catalyzes the AdoMet-dependent 2'-O-ribose methylation of cytidine at position 56 in tRNAs. The protein is tRNA (cytidine(56)-2'-O)-methyltransferase of Haloquadratum walsbyi (strain DSM 16790 / HBSQ001).